The chain runs to 267 residues: Thymidylate synthase (267 aa).

A dUMP-binding site is contributed by arginine 25. Histidine 55 contributes to the (6R)-5,10-methylene-5,6,7,8-tetrahydrofolate binding site. 130–131 (RR) lines the dUMP pocket. Cysteine 150 (nucleophile) is an active-site residue. DUMP contacts are provided by residues 170–173 (RSAD), asparagine 181, and 211–213 (HIY). Aspartate 173 serves as a coordination point for (6R)-5,10-methylene-5,6,7,8-tetrahydrofolate. Residue alanine 266 participates in (6R)-5,10-methylene-5,6,7,8-tetrahydrofolate binding.

Belongs to the thymidylate synthase family. Bacterial-type ThyA subfamily. In terms of assembly, homodimer.

The protein resides in the cytoplasm. The enzyme catalyses dUMP + (6R)-5,10-methylene-5,6,7,8-tetrahydrofolate = 7,8-dihydrofolate + dTMP. Its pathway is pyrimidine metabolism; dTTP biosynthesis. Functionally, catalyzes the reductive methylation of 2'-deoxyuridine-5'-monophosphate (dUMP) to 2'-deoxythymidine-5'-monophosphate (dTMP) while utilizing 5,10-methylenetetrahydrofolate (mTHF) as the methyl donor and reductant in the reaction, yielding dihydrofolate (DHF) as a by-product. This enzymatic reaction provides an intracellular de novo source of dTMP, an essential precursor for DNA biosynthesis. The protein is Thymidylate synthase of Corynebacterium efficiens (strain DSM 44549 / YS-314 / AJ 12310 / JCM 11189 / NBRC 100395).